The primary structure comprises 714 residues: Forkhead box protein P2 (714 aa).

Residues 1–28 (MMQESATETISNSSMNQNGMSTLSSQLD) show a composition bias toward polar residues. Disordered regions lie at residues 1 to 45 (MMQE…SEVS) and 280 to 338 (DNGI…TGAS). Over residues 291–304 (TTNNSSSTTSSTTS) the composition is skewed to low complexity. Positions 314–323 (SIVNGQSSVL) are enriched in polar residues. A compositionally biased stretch (basic and acidic residues) spans 325 to 336 (ARRDSSSHEETG). The segment at 345-370 (GVCKWPGCESICEDFGQFLKHLNNEH) adopts a C2H2-type zinc-finger fold. Positions 387–408 (VQQLEIQLSKERERLQAMMTHL) are leucine-zipper. The interval 421 to 425 (PLNLV) is CTBP1-binding. Over residues 437–458 (TSPQSLPQTPTTPTAPVTPITQ) the composition is skewed to low complexity. The tract at residues 437–464 (TSPQSLPQTPTTPTAPVTPITQGPSVIT) is disordered. The segment at residues 503 to 593 (RPPFTYATLI…SQKITGSPTL (91 aa)) is a DNA-binding region (fork-head). Disordered regions lie at residues 648 to 667 (LDHI…QPHI) and 677 to 714 (VIAE…EDLE). Positions 698 to 714 (LEDDREIEEEPLSEDLE) are enriched in acidic residues.

In terms of assembly, forms homodimers and heterodimers with FOXP1 and FOXP4. Dimerization is required for DNA-binding. Interacts with CTBP1. Interacts with FOXP1. Interacts with TBR1. Interacts with ZMYM2. As to expression, highest expression in lung. Lower expression in spleen, skeletal muscle, brain, kidney and small intestine.

The protein localises to the nucleus. Functionally, transcriptional repressor that may play a role in the specification and differentiation of lung epithelium. May also play a role in developing neural, gastrointestinal and cardiovascular tissues. Can act with CTBP1 to synergistically repress transcription but CTPBP1 is not essential. Plays a role in synapse formation by regulating SRPX2 levels. The protein is Forkhead box protein P2 (Foxp2) of Mus musculus (Mouse).